We begin with the raw amino-acid sequence, 145 residues long: D-aminoacyl-tRNA deacylase (145 aa).

Positions 137–138 (GP) match the Gly-cisPro motif, important for rejection of L-amino acids motif.

It belongs to the DTD family. Homodimer.

The protein localises to the cytoplasm. The enzyme catalyses glycyl-tRNA(Ala) + H2O = tRNA(Ala) + glycine + H(+). The catalysed reaction is a D-aminoacyl-tRNA + H2O = a tRNA + a D-alpha-amino acid + H(+). Its function is as follows. An aminoacyl-tRNA editing enzyme that deacylates mischarged D-aminoacyl-tRNAs. Also deacylates mischarged glycyl-tRNA(Ala), protecting cells against glycine mischarging by AlaRS. Acts via tRNA-based rather than protein-based catalysis; rejects L-amino acids rather than detecting D-amino acids in the active site. By recycling D-aminoacyl-tRNA to D-amino acids and free tRNA molecules, this enzyme counteracts the toxicity associated with the formation of D-aminoacyl-tRNA entities in vivo and helps enforce protein L-homochirality. The chain is D-aminoacyl-tRNA deacylase from Dichelobacter nodosus (strain VCS1703A).